The chain runs to 393 residues: Beta-1,4-galactosyltransferase 3 (393 aa).

At 1–10 the chain is on the cytoplasmic side; the sequence is MLRRLLERPC. The chain crosses the membrane as a helical; Signal-anchor for type II membrane protein span at residues 11–31; that stretch reads TLALLVGSQLAVMMYLSLGGF. The Lumenal portion of the chain corresponds to 32–393; that stretch reads RSLSALFGRD…ANHTALRGSH (362 aa). The N-linked (GlcNAc...) asparagine glycan is linked to Asn57. Cys77 and Cys119 are oxidised to a cystine. 130–134 serves as a coordination point for UDP-alpha-D-galactose; that stretch reads PHRAR. Asn166 carries N-linked (GlcNAc...) asparagine glycosylation. UDP-alpha-D-galactose-binding positions include 169–171, 196–197, Tyr226, and Trp258; these read FNR and VD. A disulfide bridge links Cys190 with Cys209. Asp197 contributes to the Mn(2+) binding site. 260–263 is a binding site for N-acetyl-D-glucosamine; it reads GEDD. A Mn(2+)-binding site is contributed by His291. A UDP-alpha-D-galactose-binding site is contributed by 291–293; it reads HRG. Arg303 lines the N-acetyl-D-glucosamine pocket. N-linked (GlcNAc...) asparagine glycans are attached at residues Asn337 and Asn385. The disordered stretch occupies residues 339-393; sequence TADIGTDPRGPRAPSGPRYPPGSSQAFRQEMLQRRPPARPGPLSTANHTALRGSH.

Belongs to the glycosyltransferase 7 family. Mn(2+) serves as cofactor. As to expression, found in various tissues. Highest expression in placenta, prostate, testis, ovary, intestine and muscle, and in fetal brain.

The protein localises to the golgi apparatus. It localises to the golgi stack membrane. It catalyses the reaction an N-acetyl-beta-D-glucosaminyl derivative + UDP-alpha-D-galactose = a beta-D-galactosyl-(1-&gt;4)-N-acetyl-beta-D-glucosaminyl derivative + UDP + H(+). The catalysed reaction is N-acetyl-D-glucosamine + UDP-alpha-D-galactose = beta-D-galactosyl-(1-&gt;4)-N-acetyl-D-glucosamine + UDP + H(+). It carries out the reaction a beta-D-GlcNAc-(1-&gt;3)-beta-D-Gal-(1-&gt;4)-beta-D-Glc-(1&lt;-&gt;1)-Cer(d18:1(4E)) + UDP-alpha-D-galactose = a neolactoside nLc4Cer(d18:1(4E)) + UDP + H(+). The enzyme catalyses a beta-D-glucosylceramide + UDP-alpha-D-galactose = a beta-D-galactosyl-(1-&gt;4)-beta-D-glucosyl-(1&lt;-&gt;1)-ceramide + UDP + H(+). It catalyses the reaction a neolactoside IV(3)-beta-GlcNAc-nLc4Cer + UDP-alpha-D-galactose = a neolactoside nLc6Cer + UDP + H(+). It functions in the pathway protein modification; protein glycosylation. Its function is as follows. Responsible for the synthesis of complex-type N-linked oligosaccharides in many glycoproteins as well as the carbohydrate moieties of glycolipids. This is Beta-1,4-galactosyltransferase 3 from Homo sapiens (Human).